The following is a 445-amino-acid chain: GTPase Obg (445 aa).

The Obg domain maps to 7–164 (PEFVDCVTVE…RKLRLEVKSI (158 aa)). The 178-residue stretch at 165–342 (ADVALVGFPS…FTLRLGEICQ (178 aa)) folds into the OBG-type G domain. GTP is bound by residues 171-178 (GFPSVGKS), 196-200 (FTTLH), 217-220 (DVPG), 291-294 (NKID), and 323-325 (SAV). 2 residues coordinate Mg(2+): S178 and T198. The region spanning 357 to 434 (IPAKNTPEFS…IGGVIFTWDP (78 aa)) is the OCT domain.

This sequence belongs to the TRAFAC class OBG-HflX-like GTPase superfamily. OBG GTPase family. As to quaternary structure, monomer. Mg(2+) serves as cofactor.

The protein localises to the cytoplasm. Its function is as follows. An essential GTPase which binds GTP, GDP and possibly (p)ppGpp with moderate affinity, with high nucleotide exchange rates and a fairly low GTP hydrolysis rate. Plays a role in control of the cell cycle, stress response, ribosome biogenesis and in those bacteria that undergo differentiation, in morphogenesis control. The sequence is that of GTPase Obg from Tropheryma whipplei (strain Twist) (Whipple's bacillus).